A 318-amino-acid chain; its full sequence is Ubiquitin-like domain-containing CTD phosphatase 1 (318 aa).

The Ubiquitin-like domain occupies Leu-3–Ser-81. An FCP1 homology domain is found at Pro-133–Ile-294. Mg(2+)-binding residues include Asp-143, Asp-145, and Asp-253.

Requires Mg(2+) as cofactor.

The protein localises to the nucleus. It catalyses the reaction O-phospho-L-seryl-[protein] + H2O = L-seryl-[protein] + phosphate. It carries out the reaction O-phospho-L-threonyl-[protein] + H2O = L-threonyl-[protein] + phosphate. Dephosphorylates 26S nuclear proteasomes, thereby decreasing their proteolytic activity. Recruited to the 19S regulatory particle of the 26S proteasome where it dephosphorylates 19S component psmc2 which impairs psmc2 ATPase activity and disrupts 26S proteasome assembly. Has also been reported to stimulate the proteolytic activity of the 26S proteasome. The sequence is that of Ubiquitin-like domain-containing CTD phosphatase 1 (ublcp1) from Xenopus tropicalis (Western clawed frog).